We begin with the raw amino-acid sequence, 1441 residues long: Pleiotropic drug resistance protein TUR2 (1441 aa).

One can recognise an ABC transporter 1 domain in the interval 158–430; that stretch reads LSALHLMPSG…FESMGFKCPE (273 aa). 191 to 198 is a binding site for ATP; sequence GPPGAGKT. An ABC transmembrane type-2 1 domain is found at 508–721; that stretch reads ELLKACIDRE…AQNAIAVNEF (214 aa). 6 consecutive transmembrane segments (helical) span residues 526-546, 559-579, 614-634, 646-666, 671-691, and 756-776; these read FVYI…MTVF, ATIF…NGFA, IPIS…VIGF, LLLV…AAVG, VADT…GFII, and IGVG…ILFL. The region spanning 843 to 1095 is the ABC transporter 2 domain; that stretch reads ITFDNVKYSV…HLIKYFESID (253 aa). An ATP-binding site is contributed by 888–895; that stretch reads GVSGRGKT. In terms of domain architecture, ABC transmembrane type-2 2 spans 1168 to 1382; that stretch reads MQCLACLWKQ…TLYGLVVSQF (215 aa). 7 helical membrane-spanning segments follow: residues 1187 to 1207, 1215 to 1235, 1275 to 1295, 1302 to 1322, 1332 to 1352, 1363 to 1383, and 1413 to 1433; these read YTAT…TIFW, TSLD…FIGI, VPHI…MIGF, FLWY…YGMM, IAAI…GFII, WYYW…SQFG, and VVGV…AFSI.

It belongs to the ABC transporter superfamily. ABCG family. PDR (TC 3.A.1.205) subfamily. As to expression, ubiquitous.

It localises to the cell membrane. May be a general defense protein. Seems involved in turion (dormant buds) formation. Confers resistance to the diterpenoid antifungal agent sclareol. The chain is Pleiotropic drug resistance protein TUR2 (TUR2) from Spirodela polyrhiza (Giant duckweed).